A 120-amino-acid polypeptide reads, in one-letter code: uncharacterized protein (120 aa).

This is an uncharacterized protein from Enterobacteria phage T4 (Bacteriophage T4).